The primary structure comprises 571 residues: MAKVRIYQLAKELGMETQELLELLDQMGVAYKSHASTLEEKDAEAVRELVKEQRGLQEKLAEEERRKSLPRRPPVVVIMGHVDHGKTTLLDYLRKSRIAEKEAGGITQHVGAFEVKTPQGTVVFIDTPGHEAFTTIRQRGAKVADIAVIVIAADDGIMPQTEEAIAHAKAAGAKLIFAINKIDLPQADPEKVKRQLMERGFVPEEYGGDAIVIPISAKTGQGVQDLLEMILLLAELEDYRADPNAEPRGVILESKLDKQAGIIANMLVQEGTFRVGDYVVAGEAYGRIRAMMDADGNQRKEAGPGSAVQVLGFQELPHAGDVVEWVPDLEAAKEIAEERKEERKAREEEEKARRPRTMAELLRAMQEEGRKELNLILRADTQGSLEAIQHILARESTEDVKINILLAQVGAPTESDVLLAQTANAAILAFGVNPPGSVKKKAEEKGVLLKTFRIIYDLVDEVRNMVKGQREPQYKEEVLGQAEVRAIFRLPTGKQVAGCMVTQGRIPRNAEVRVLRDGQVIWQGRIASLKRFKEDVREVAQGYECGIGLDGFDDFREGDVIEAFQMVEVPA.

The 169-residue stretch at 71–239 folds into the tr-type G domain; it reads RRPPVVVIMG…ILLLAELEDY (169 aa). Residues 80–87 form a G1 region; the sequence is GHVDHGKT. 80 to 87 is a binding site for GTP; the sequence is GHVDHGKT. Residues 105–109 form a G2 region; the sequence is GITQH. Residues 126–129 form a G3 region; the sequence is DTPG. Residues 126–130 and 180–183 contribute to the GTP site; these read DTPGH and NKID. A G4 region spans residues 180–183; sequence NKID. The G5 stretch occupies residues 216–218; that stretch reads SAK.

This sequence belongs to the TRAFAC class translation factor GTPase superfamily. Classic translation factor GTPase family. IF-2 subfamily.

It is found in the cytoplasm. Its function is as follows. One of the essential components for the initiation of protein synthesis. Protects formylmethionyl-tRNA from spontaneous hydrolysis and promotes its binding to the 30S ribosomal subunits. Also involved in the hydrolysis of GTP during the formation of the 70S ribosomal complex. The sequence is that of Translation initiation factor IF-2 from Thermus thermophilus (strain ATCC BAA-163 / DSM 7039 / HB27).